The following is a 426-amino-acid chain: Glutamate/glutamine/aspartate/asparagine transport system permease protein BztB (426 aa).

8 helical membrane passes run Ser-25 to Asn-45, Leu-96 to Leu-116, Val-132 to Ala-152, Leu-211 to Trp-231, Trp-252 to Phe-272, Ser-293 to Val-313, Ser-340 to Leu-360, and Met-396 to Leu-416. The ABC transmembrane type-1 domain occupies Leu-92–Met-414.

Belongs to the binding-protein-dependent transport system permease family. HisMQ subfamily. In terms of assembly, bztB and BztC form a heterodimer which can form a membrane complex with a homodimer of BztD.

It is found in the cell inner membrane. Functionally, part of a binding-protein-dependent transport system for glutamate, glutamine, aspartate and asparagine. Probably responsible for the translocation of the substrate across the membrane. The protein is Glutamate/glutamine/aspartate/asparagine transport system permease protein BztB (bztB) of Rhodobacter capsulatus (strain ATCC BAA-309 / NBRC 16581 / SB1003).